The sequence spans 298 residues: Syntaxin-4 (298 aa).

Residues 1–274 (MRDRTHELRQ…NQKKARKKKV (274 aa)) are Cytoplasmic-facing. Phosphoserine is present on residues Ser15, Ser29, Ser35, Ser36, Ser117, Ser208, and Ser248. Residues 38–163 (DDEFFQKVQT…ERIRRQLKIT (126 aa)) are a coiled coil. An interaction with CENPF region spans residues 154–298 (ERIRRQLKIT…VIIGITITVG (145 aa)). The region spanning 200 to 262 (LNEISARHSE…ERGQEHVKIA (63 aa)) is the t-SNARE coiled-coil homology domain. Residues 275-295 (MIAICVSVTVLILAVIIGITI) form a helical; Anchor for type IV membrane protein membrane-spanning segment. The Extracellular segment spans residues 296 to 298 (TVG).

It belongs to the syntaxin family. Found in a complex with VAMP8 and SNAP23. Detected in a complex with SNAP23 and STXBP4. Interacts with SNAP23 and SNAPIN. Interacts with VAMP2. Interacts with LLGL1. Interacts (via C-terminus) with CENPF. Interacts with DOC2B. Interacts with STXBP3; excludes interaction with DOC2B and SNAP25. Interacts with STXBP4; excludes interaction with VAMP2. Component of the SNARE complex composed of STX4, SNAP23 and VAMP7 that interacts with SYT7 during lysosomal exocytosis. Interacts with STXBP6. Interacts with STXBP5L. As to expression, expressed in all tissues tested including adipose, brain, testis, intestine, liver, heart, spleen, skeletal muscle and kidney.

It localises to the cell membrane. The protein localises to the cell projection. It is found in the neuron projection. Its subcellular location is the stereocilium. Its function is as follows. Plasma membrane t-SNARE that mediates docking of transport vesicles. Necessary for the translocation of SLC2A4 from intracellular vesicles to the plasma membrane. In neurons, recruited at neurite tips to membrane domains rich in the phospholipid 1-oleoyl-2-palmitoyl-PC (OPPC) which promotes neurite tip surface expression of the dopamine transporter SLC6A3/DAT by facilitating fusion of SLC6A3-containing transport vesicles with the plasma membrane. Together with STXB3 and VAMP2, may also play a role in docking/fusion of intracellular GLUT4-containing vesicles with the cell surface in adipocytes and in docking of synaptic vesicles at presynaptic active zones. Required for normal hearing. The sequence is that of Syntaxin-4 (Stx4) from Rattus norvegicus (Rat).